Here is an 82-residue protein sequence, read N- to C-terminus: DNA gyrase inhibitor YacG (82 aa).

Zn(2+) is bound by residues Cys9, Cys12, Cys27, and Cys31. Residues 44 to 82 form a disordered region; sequence IGLPHEGDPGDAPVEYLDDRDLTQPSPERQNESFHRYSE. A compositionally biased stretch (basic and acidic residues) spans 72-82; that stretch reads RQNESFHRYSE.

This sequence belongs to the DNA gyrase inhibitor YacG family. Interacts with GyrB. Zn(2+) serves as cofactor.

Inhibits all the catalytic activities of DNA gyrase by preventing its interaction with DNA. Acts by binding directly to the C-terminal domain of GyrB, which probably disrupts DNA binding by the gyrase. The protein is DNA gyrase inhibitor YacG of Rhodopirellula baltica (strain DSM 10527 / NCIMB 13988 / SH1).